The primary structure comprises 328 residues: tRNA uridine(34) hydroxylase (328 aa).

One can recognise a Rhodanese domain in the interval 130–224 (LDEDTVVLDT…YGKDPEVQGE (95 aa)). Catalysis depends on C184, which acts as the Cysteine persulfide intermediate.

It belongs to the TrhO family.

The catalysed reaction is uridine(34) in tRNA + AH2 + O2 = 5-hydroxyuridine(34) in tRNA + A + H2O. Catalyzes oxygen-dependent 5-hydroxyuridine (ho5U) modification at position 34 in tRNAs. In Streptococcus pyogenes serotype M12 (strain MGAS2096), this protein is tRNA uridine(34) hydroxylase.